A 184-amino-acid polypeptide reads, in one-letter code: Transmembrane protein 140 (184 aa).

Residues 1–12 (MAISRVWRNRLS) lie on the Cytoplasmic side of the membrane. A helical membrane pass occupies residues 13-33 (FMAIMILVAMVLSLMSYALLW). Topologically, residues 34 to 83 (KAGNLTDVPNLRIGFYNFCLWKEDIGSLECYNFPELGVLGIPQVGLALAR) are extracellular. An N-linked (GlcNAc...) asparagine glycan is attached at Asn-37. A helical membrane pass occupies residues 84-104 (LGVYGALVLAVFVPLPLLLAQ). The Cytoplasmic portion of the chain corresponds to 105-117 (CNSDEGEWRLAVG). A helical transmembrane segment spans residues 118–138 (FLGASSVLLAGGLSLFLFLVW). Residues 139-149 (KWLRLSFLGPG) lie on the Extracellular side of the membrane. The helical transmembrane segment at 150 to 170 (FLSLCLAQALLIILLMAMVMF) threads the bilayer. Residues 171–184 (PPRDKKDKNHWENC) are Cytoplasmic-facing.

Its subcellular location is the membrane. This is Transmembrane protein 140 (Tmem140) from Rattus norvegicus (Rat).